The chain runs to 605 residues: Beta-hexosaminidase ARB_07893 (605 aa).

An N-terminal signal peptide occupies residues 1–18 (MLWIWVPGILGLFGRVEA). Asn-30 is a glycosylation site (N-linked (GlcNAc...) asparagine). Glu-293 (nucleophile) is an active-site residue. The N-linked (GlcNAc...) asparagine glycan is linked to Asn-342. The active-site Proton donor is the Glu-374. Residue Asn-449 is glycosylated (N-linked (GlcNAc...) asparagine).

Belongs to the glycosyl hydrolase 20 family.

It is found in the secreted. It catalyses the reaction Hydrolysis of terminal non-reducing N-acetyl-D-hexosamine residues in N-acetyl-beta-D-hexosaminides.. In terms of biological role, beta-hexosaminidase that shows a broad substrate specificity. The sequence is that of Beta-hexosaminidase ARB_07893 from Arthroderma benhamiae (strain ATCC MYA-4681 / CBS 112371) (Trichophyton mentagrophytes).